The sequence spans 598 residues: MAGEGRRAEAVREGWGVYVTPRAPIREGRGRLAPQNGGSSDAPAYRTSLSRQGRREVRFSDEPPEVYGDFEPLVDKERSPVGKRTRLEEFRSDSAKEEVRESAYYLRSRQRRQPRPQEAEEMKTRRTTRLQQQHSQQPPLQPSPVMTRRGLRDSHSSEEDEPSSPTDLSQTISKKTVRSIQEAPAESEDLVISLRRPPLRYPRSEATSVQQKVNFSEEGETEDDQDSSHSSVTTVKSRSRDSDESGDKTTRSSSQYIESFWQSSQSQNFTAHDKQPSVLSSGYQKTPQEWAPQTARMRTRMQTSSPGKSSIYGSFSDDDSILKSELGNQSPSTSSQQVTGQPQNASFVKRNWWWLLPLIAALASGSFWFFSTPEVETTAVQEFQNQMNQLKNKYQGQDEKLWKRSQTFLEKHLNSSHPRSQPAILLLTAARDAEEALRCLSEQIADAYSSFHSVRAIRIDGTDKATQDSDTVKLEVDQELSNGLKNGQNAAVVHRFESFPAGSTLIFYKYCDHENAAFKDVALVLTVLLEEETLGTSLGLKEVEEKVRDFLKVKFTNSNTPNSYNHMDPDKLNGLWSRISHLVLPVQPENALKRGICL.

The Nuclear portion of the chain corresponds to 1-351 (MAGEGRRAEA…PQNASFVKRN (351 aa)). 2 disordered regions span residues 19-254 (VTPR…RSSS) and 267-314 (QNFT…IYGS). The residue at position 60 (Ser60) is a Phosphoserine. 2 stretches are compositionally biased toward basic and acidic residues: residues 73–101 (LVDK…EVRE) and 115–124 (RPQEAEEMKT). A phosphoserine mark is found at Ser135, Ser143, Ser154, Ser156, Ser157, and Ser187. Polar residues predominate over residues 205–214 (EATSVQQKVN). A Phosphoserine modification is found at Ser216. At Thr221 the chain carries Phosphothreonine. Ser227, Ser230, and Ser242 each carry phosphoserine. The segment covering 238 to 250 (RSRDSDESGDKTT) has biased composition (basic and acidic residues). Polar residues-rich tracts occupy residues 277–287 (SVLSSGYQKTP) and 300–313 (RMQT…SIYG). Residue Ser320 is modified to Phosphoserine. Positions 322-341 (LKSELGNQSPSTSSQQVTGQ) are disordered. Residue Lys323 forms a Glycyl lysine isopeptide (Lys-Gly) (interchain with G-Cter in SUMO2) linkage. The span at 326–341 (LGNQSPSTSSQQVTGQ) shows a compositional bias: polar residues. Ser330 is subject to Phosphoserine. Residues 352-372 (WWWLLPLIAALASGSFWFFST) traverse the membrane as a helical segment. Positions 371–598 (STPEVETTAV…ENALKRGICL (228 aa)) are interaction with TOR1A. Topologically, residues 373-598 (PEVETTAVQE…ENALKRGICL (226 aa)) are perinuclear space. The stretch at 374 to 450 (EVETTAVQEF…SEQIADAYSS (77 aa)) forms a coiled coil. N-linked (GlcNAc...) asparagine glycosylation occurs at Asn414.

It belongs to the TOR1AIP family. As to quaternary structure, interacts with ATP1B4. Interacts with TOR1A (ATP-bound). Interacts with TOR1B, TOR2A and TOR3A.

It is found in the nucleus inner membrane. Functionally, required for nuclear membrane integrity. Induces TOR1A and TOR1B ATPase activity and is required for their location on the nuclear membrane. Binds to A- and B-type lamins. Possible role in membrane attachment and assembly of the nuclear lamina. This is Torsin-1A-interacting protein 1 (TOR1AIP1) from Pongo abelii (Sumatran orangutan).